The primary structure comprises 371 residues: DNA replication and repair protein RecF (371 aa).

30-37 (GQNGSGKT) contributes to the ATP binding site.

The protein belongs to the RecF family.

It is found in the cytoplasm. The RecF protein is involved in DNA metabolism; it is required for DNA replication and normal SOS inducibility. RecF binds preferentially to single-stranded, linear DNA. It also seems to bind ATP. The polypeptide is DNA replication and repair protein RecF (Chlorobium phaeovibrioides (strain DSM 265 / 1930) (Prosthecochloris vibrioformis (strain DSM 265))).